The sequence spans 283 residues: Prepilin leader peptidase/N-methyltransferase (283 aa).

7 helical membrane-spanning segments follow: residues 13–33 (VWLLALLLLGLIIGSFLNVVI), 106–126 (WRYPLIELLSGLSFLLAGLLW), 128–148 (PGLALLGALLCFGIFVALAAI), 153–173 (QLLPDVMTLPLLWGGLLFNLA), 176–196 (FVPLEQAVVGAVAGYLSLWLI), 216–236 (LLAALGAWLGWQALPNLVLIA), and 259–279 (LAFGPWLAVSGAMGLVLNVLG).

The protein belongs to the peptidase A24 family.

Its subcellular location is the cell inner membrane. It catalyses the reaction Typically cleaves a -Gly-|-Phe- bond to release an N-terminal, basic peptide of 5-8 residues from type IV prepilin, and then N-methylates the new N-terminal amino group, the methyl donor being S-adenosyl-L-methionine.. In terms of biological role, plays a role in type II pseudopili formation by proteolytically removing the leader sequence from substrate proteins and subsequently monomethylating the alpha-amino group of the newly exposed N-terminal phenylalanine. Substrates include proteins required for biogenesis of the type II general secretory apparatus. In Dickeya chrysanthemi (Pectobacterium chrysanthemi), this protein is Prepilin leader peptidase/N-methyltransferase (outO).